The chain runs to 90 residues: Translation initiation factor IF-1 (90 aa).

The region spanning Lys-7–Lys-76 is the S1-like domain.

The protein belongs to the IF-1 family. In terms of assembly, component of the 30S ribosomal translation pre-initiation complex which assembles on the 30S ribosome in the order IF-2 and IF-3, IF-1 and N-formylmethionyl-tRNA(fMet); mRNA recruitment can occur at any time during PIC assembly.

The protein resides in the cytoplasm. In terms of biological role, one of the essential components for the initiation of protein synthesis. Stabilizes the binding of IF-2 and IF-3 on the 30S subunit to which N-formylmethionyl-tRNA(fMet) subsequently binds. Helps modulate mRNA selection, yielding the 30S pre-initiation complex (PIC). Upon addition of the 50S ribosomal subunit IF-1, IF-2 and IF-3 are released leaving the mature 70S translation initiation complex. The polypeptide is Translation initiation factor IF-1 (Fervidobacterium nodosum (strain ATCC 35602 / DSM 5306 / Rt17-B1)).